We begin with the raw amino-acid sequence, 97 residues long: Large ribosomal subunit protein bL25 (97 aa).

This sequence belongs to the bacterial ribosomal protein bL25 family. In terms of assembly, part of the 50S ribosomal subunit; part of the 5S rRNA/L5/L18/L25 subcomplex. Contacts the 5S rRNA. Binds to the 5S rRNA independently of L5 and L18.

In terms of biological role, this is one of the proteins that binds to the 5S RNA in the ribosome where it forms part of the central protuberance. The protein is Large ribosomal subunit protein bL25 of Blochmanniella pennsylvanica (strain BPEN).